The sequence spans 274 residues: ATP synthase subunit a (274 aa).

Helical transmembrane passes span 44–64, 110–130, 142–164, 212–232, and 243–263; these read VDSMFFSLVLGSFFLSIFYMV, FIWVFLMNLMDLVPIDFFPFI, IVPSADINITLSMSLGVFFLILF, LFGNMYAGEMIFILIAGLLPW, and AIFHILIISLQAFIFMVLTIV.

This sequence belongs to the ATPase A chain family. As to quaternary structure, F-type ATPases have 2 components, CF(1) - the catalytic core - and CF(0) - the membrane proton channel. CF(1) has five subunits: alpha(3), beta(3), gamma(1), delta(1), epsilon(1). CF(0) has three main subunits: a(1), b(2) and c(9-12). The alpha and beta chains form an alternating ring which encloses part of the gamma chain. CF(1) is attached to CF(0) by a central stalk formed by the gamma and epsilon chains, while a peripheral stalk is formed by the delta and b chains.

It is found in the cell membrane. Functionally, key component of the proton channel; it plays a direct role in the translocation of protons across the membrane. The protein is ATP synthase subunit a of Buchnera aphidicola subsp. Acyrthosiphon pisum (strain APS) (Acyrthosiphon pisum symbiotic bacterium).